We begin with the raw amino-acid sequence, 157 residues long: Transcription antitermination protein NusB (157 aa).

It belongs to the NusB family.

Involved in transcription antitermination. Required for transcription of ribosomal RNA (rRNA) genes. Binds specifically to the boxA antiterminator sequence of the ribosomal RNA (rrn) operons. This Xylella fastidiosa (strain Temecula1 / ATCC 700964) protein is Transcription antitermination protein NusB.